The following is a 417-amino-acid chain: Membrane protein UL43 (417 aa).

The segment at 1-21 (MLRNDSHRAVSPEDGQGRVDD) is disordered. 5 helical membrane-spanning segments follow: residues 57 to 77 (GPYA…LGFM), 90 to 110 (IYAW…SLGE), 119 to 139 (APGP…LLVL), 146 to 166 (LFLL…VGGL), and 175 to 195 (WWIG…GPGA). A disordered region spans residues 217–254 (AGESLSRRPPEDPERPGVPGPPSPPTPQRSHGPPADEV). A compositionally biased stretch (basic and acidic residues) spans 221–231 (LSRRPPEDPER). Pro residues predominate over residues 232-243 (PGVPGPPSPPTP). 5 helical membrane passes run 263–283 (ENVW…VKTV), 291–311 (PGPG…AVAL), 323–343 (LTDP…GLVF), 348–368 (VVVY…VLGL), and 389–409 (GLFF…CPPG).

This sequence belongs to the alphaherpesvirinae HHV-1 UL43 family.

It is found in the membrane. This is Membrane protein UL43 from Human herpesvirus 1 (strain 17) (HHV-1).